A 107-amino-acid chain; its full sequence is Monogrin 2 (107 aa).

Residues 1–20 (MEGKVLLCFALLLPFTVAQA) form the signal peptide. 3 cysteine pairs are disulfide-bonded: Cys28–Cys82, Cys36–Cys62, and Cys55–Cys78. The BPTI/Kunitz inhibitor domain occupies 29-82 (GYLMMQRCRGDTTETKAWGFNYEEKKCQKETVICGTGGAPRNAFETKKDCDALC). A Cell attachment site motif is present at residues 37–39 (RGD).

Post-translationally, the N-terminus is blocked. Expressed in salivary glands.

The protein resides in the cytoplasmic vesicle. It is found in the secretory vesicle. The protein localises to the secreted. Its function is as follows. Tick salivary platelet aggregation inhibitor that plays an important part in the anti-hemostatic strategy of ticks. Inhibits platelet aggregation induced by ADP (IC(50)~150 nM), collagen, and platelet activating factor (PAF). Acts by binding to platelet membrane glycoprotein IIb-IIIa (ITGA2B/ITGB3) in a metal ion dependent manner. Does not inhibit aggregation induced by ristocecin, an agonist that aggregates platelets independently from the glycoprotein IIb-IIIa (ITGA2B/ITGB3). In contrast to other tick platelet aggregation inhibitors, this protein does not protect ITGA2B/ITGB3 from dissociation under SDS condition, suggesting it may dissocate much faster than its orthologs. This chain is Monogrin 2, found in Argas monolakensis (Mono lake bird tick).